A 109-amino-acid chain; its full sequence is U16-hexatoxin-Hi1a (109 aa).

An N-terminal signal peptide occupies residues 1 to 16 (LTGHLCCMMIWWQATQ). Positions 17–43 (VISPPLPVIREENNSHKMGVSLFPLKR) are excised as a propeptide.

Post-translationally, contains 2 disulfide bonds. In terms of tissue distribution, expressed by the venom gland.

It localises to the secreted. Probable ion channel inhibitor. This chain is U16-hexatoxin-Hi1a, found in Hadronyche infensa (Fraser island funnel-web spider).